The following is a 1051-amino-acid chain: Serine/threonine-protein kinase ULK1 (1051 aa).

The Protein kinase domain maps to Phe16 to Leu278. ATP is bound by residues Ile22–Val30 and Lys46. Asp138 serves as the catalytic Proton acceptor. The residue at position 162 (Lys162) is an N6-acetyllysine. 3 disordered regions span residues Pro283–Gln323, Ala335–Val358, and Gly394–His554. The segment at Ser287–Gly416 is interaction with GABARAP and GABARAPL2. 3 stretches are compositionally biased toward low complexity: residues Tyr295–Leu318, Gly340–Lys349, and Arg400–Ser423. Ser317 is subject to Phosphoserine; by AMPK. Ser403 and Ser450 each carry phosphoserine. Positions Gln437 to Ser459 are enriched in polar residues. A Phosphothreonine modification is found at Thr456. Ser467, Ser477, Ser479, and Ser521 each carry phosphoserine. Ser555 carries the post-translational modification Phosphoserine; by AMPK. Thr574 carries the phosphothreonine modification. N6-acetyllysine is present on Lys606. Residue Thr635 is modified to Phosphothreonine. Ser637 carries the post-translational modification Phosphoserine; by AMPK. Ser638 carries the phosphoserine modification. 2 disordered regions span residues Pro661 to Gly686 and Ala727 to Ser787. Residues Gly731–Ala745 are compositionally biased toward gly residues. The residue at position 757 (Ser757) is a Phosphoserine; by MTOR. Ser774 carries the post-translational modification Phosphoserine. Residues Ser774 to Ser787 are compositionally biased toward low complexity. Ser777 is modified (phosphoserine; by AMPK). Positions Pro829–Ala1051 are C-terminal domain; mediates interaction with SESN2.

It belongs to the protein kinase superfamily. Ser/Thr protein kinase family. APG1/unc-51/ULK1 subfamily. Interacts with GABARAP and GABARAPL2. Interacts (via C-terminus) with ATG13. Part of a complex consisting of ATG13, ATG101, ULK1 and RB1CC1. Associates with the mammalian target of rapamycin complex 1 (mTORC1) through an interaction with RPTOR; the association depends on nutrient conditions and is reduced during starvation. Interacts with FEZ1; SCOC interferes with FEZ1-binding. Interacts with TBC1D14. Interacts (phosphorylated form) with TRIM5. When phosphorylated at Ser-317, interacts with MEFV and BECN1 simultaneously. Interacts with TRIM21 and IRF3, in the presence of TRIM21. Interacts with SESN2. Interacts with SQSTM1. Interacts with C9orf72. Interacts with WDR45. Interacts with ATG13; this interaction is increased in the absence of TMEM39A. Interacts with WIPI2. Interacts with ATP2A2. Interacts with AMBRA1. Interacts with Irgm1; promoting the coassembly of ULK1 and BECN1. In terms of processing, autophosphorylated. Phosphorylated under nutrient-rich conditions; dephosphorylated during starvation or following treatment with rapamycin. In response to nutrient limitation, phosphorylated and activated by AMPK, leading to activate autophagy. Under nutrient sufficiency, phosphorylated by MTOR/mTOR, disrupting the interaction with AMPK and preventing activation of ULK1. Post-translationally, ubiquitinated via 'Lys-63'-linkage by a complex composed of AMBRA1 and TRAF6 following autophagy induction, promoting ULK1 stability and kinase activity. Deubiquitinated by USP20; leading to ULK1 stability and autophagy initiation. Acetylated by KAT5/TIP60 under autophagy induction, promoting protein kinase activity.

The protein localises to the cytoplasm. It localises to the cytosol. Its subcellular location is the preautophagosomal structure. The enzyme catalyses L-seryl-[protein] + ATP = O-phospho-L-seryl-[protein] + ADP + H(+). The catalysed reaction is L-threonyl-[protein] + ATP = O-phospho-L-threonyl-[protein] + ADP + H(+). With respect to regulation, acetylation by KAT5/TIP60 stimulates the protein kinase activity. The protein kinase activity is activated by unanchored 'Lys-63'-linked polyubiquitin chains: unanchored 'Lys-63'-linked polyubiquitin chains are catalyzed by TRIM32 in an AMBRA1-dependent manner. In terms of biological role, serine/threonine-protein kinase involved in autophagy in response to starvation. Acts upstream of phosphatidylinositol 3-kinase PIK3C3 to regulate the formation of autophagophores, the precursors of autophagosomes. Part of regulatory feedback loops in autophagy: acts both as a downstream effector and negative regulator of mammalian target of rapamycin complex 1 (mTORC1) via interaction with RPTOR. Activated via phosphorylation by AMPK and also acts as a regulator of AMPK by mediating phosphorylation of AMPK subunits PRKAA1, PRKAB2 and PRKAG1, leading to negatively regulate AMPK activity. May phosphorylate ATG13/KIAA0652 and RPTOR; however such data need additional evidences. Plays a role early in neuronal differentiation and is required for granule cell axon formation. Also phosphorylates SESN2 and SQSTM1 to regulate autophagy. Phosphorylates FLCN, promoting autophagy. Phosphorylates AMBRA1 in response to autophagy induction, releasing AMBRA1 from the cytoskeletal docking site to induce autophagosome nucleation. Phosphorylates ATG4B, leading to inhibit autophagy by decreasing both proteolytic activation and delipidation activities of ATG4B. The protein is Serine/threonine-protein kinase ULK1 (Ulk1) of Mus musculus (Mouse).